We begin with the raw amino-acid sequence, 446 residues long: uncharacterized protein (446 aa).

Transmembrane regions (helical) follow at residues 20 to 40 (LIGVGCTIGTGFFLGSSIAIV), 42 to 62 (SGFSVLLSFLIAGIGTYFVFE), 95 to 115 (WVYWTSEMLITGSQLTAISLF), 127 to 147 (VFASIYAVLGLLIIFTGLSVF), 160 to 180 (AAIFMFIVIAILALCGILSGG), 205 to 225 (LIYAFYAFGGIEVMGLMAVHL), 237 to 257 (LMLATLAIIYIISIGLALLLV), 284 to 304 (IFNGIFIIAGFSTLVASLFAV), 331 to 351 (WPALGLTFAGLVLSIILSLVL), 355 to 375 (IYEHMTTAAGLMLLYTWLFIL), 388 to 408 (GKTQIYLAMVLIAAAVSGTLF), and 414 to 434 (PGFFVSIGFLVIIAIVTMIYQ).

The protein belongs to the amino acid-polyamine-organocation (APC) superfamily.

The protein localises to the cell membrane. This is an uncharacterized protein from Bacillus subtilis (strain 168).